The sequence spans 70 residues: Acyl carrier protein (70 aa).

The region spanning serine 2–proline 70 is the Carrier domain. The residue at position 37 (serine 37) is an O-(pantetheine 4'-phosphoryl)serine.

This sequence belongs to the acyl carrier protein (ACP) family. In terms of processing, 4'-phosphopantetheine is transferred from CoA to a specific serine of apo-ACP by AcpS. This modification is essential for activity because fatty acids are bound in thioester linkage to the sulfhydryl of the prosthetic group.

The protein localises to the cytoplasm. It participates in lipid metabolism; fatty acid biosynthesis. Its function is as follows. Carrier of the growing fatty acid chain in fatty acid biosynthesis. This Cereibacter sphaeroides (Rhodobacter sphaeroides) protein is Acyl carrier protein.